Consider the following 445-residue polypeptide: Phosphoglucosamine mutase (445 aa).

Residue S102 is the Phosphoserine intermediate of the active site. Residues S102, D241, D243, and D245 each coordinate Mg(2+). The residue at position 102 (S102) is a Phosphoserine.

This sequence belongs to the phosphohexose mutase family. It depends on Mg(2+) as a cofactor. Activated by phosphorylation.

It carries out the reaction alpha-D-glucosamine 1-phosphate = D-glucosamine 6-phosphate. Its function is as follows. Catalyzes the conversion of glucosamine-6-phosphate to glucosamine-1-phosphate. This is Phosphoglucosamine mutase from Enterobacter sp. (strain 638).